The following is a 209-amino-acid chain: Large ribosomal subunit protein uL3 (209 aa).

It belongs to the universal ribosomal protein uL3 family. As to quaternary structure, part of the 50S ribosomal subunit. Forms a cluster with proteins L14 and L19.

Its function is as follows. One of the primary rRNA binding proteins, it binds directly near the 3'-end of the 23S rRNA, where it nucleates assembly of the 50S subunit. In Carboxydothermus hydrogenoformans (strain ATCC BAA-161 / DSM 6008 / Z-2901), this protein is Large ribosomal subunit protein uL3.